Consider the following 111-residue polypeptide: Protein YibV (111 aa).

This is Protein YibV (yibV) from Escherichia coli O157:H7.